The primary structure comprises 249 residues: Probable transcriptional regulatory protein LBL_2537 (249 aa).

The protein belongs to the TACO1 family.

The protein resides in the cytoplasm. This is Probable transcriptional regulatory protein LBL_2537 from Leptospira borgpetersenii serovar Hardjo-bovis (strain L550).